A 341-amino-acid chain; its full sequence is Transmembrane protein 120A-A (341 aa).

The Cytoplasmic segment spans residues 1-131 (MLFNPTGLTE…KQSKFAYKDE (131 aa)). Position 129 (K129) interacts with CoA. Residues 132–151 (YEKFKLYLTVLLLFFSFTCR) form a helical membrane-spanning segment. Residues 152–157 (FLVSYR) lie on the Extracellular side of the membrane. Residues 158–176 (VVDALFNFLLVWYYCTLTI) form a helical membrane-spanning segment. The Cytoplasmic portion of the chain corresponds to 177–189 (RESILINNGSKIK). Residues S186 and K187 each coordinate CoA. Residues 190–208 (GWWVFQHYVSTFLSGVMLT) form a helical membrane-spanning segment. At 209 to 217 (WPDGELYQM) the chain is on the extracellular side. A helical transmembrane segment spans residues 218–239 (FRNQFLSYSMYINFVQFFQYYY). CoA is bound by residues Q236, Y239, Q240, and H282. Topologically, residues 240–269 (QSGCLYRLRALGERHNMDLTVEGFQSWMWR) are cytoplasmic. A helical membrane pass occupies residues 270-293 (GLTFLLPFLFLGHFFQLYNGITLF). The Extracellular segment spans residues 294–303 (QMTQLPEWKE). A helical membrane pass occupies residues 304–329 (WQVLMCGSTFLVLFMGNFFTTLGVVY). Over 330–341 (HKYMDQDKAKGL) the chain is Cytoplasmic. Position 331 (K331) interacts with CoA.

This sequence belongs to the TMEM120 family. Homodimer.

The protein resides in the cell membrane. It localises to the nucleus inner membrane. It is found in the endoplasmic reticulum. Multifunctional protein involved in mechanosensation, and plays an essential role in lipid metabolism. May function as a potential ion channel involved in sensing mechanical stimuli. TMEM120A is structurally similar to a lipid-modifying enzyme, ELOVL7, and contains a bound coenzyme A molecule, which suggests it might function as an enzyme in lipid metabolism. The protein is Transmembrane protein 120A-A (tmem120aa) of Danio rerio (Zebrafish).